The following is a 217-amino-acid chain: MGQKVHPIGMRVGVIRDWDAKWYAEKEYADYLHEDLAIRQLIQTKLADASVSLIETERAINKVIVTLHTAKPGMVIGKSGANVDALRAELNKLTGKQVHINIVEIKKPDLDAHLVGEGIAKQLEARIAFRRAQKQAIQRAMRAGAKGIKTQVSGRLNGADIARAEGYSEGTVPLHTLRADIDYAWEEADTTYGKLGVKVWIYRGEVLPTKKSVKGEK.

The KH type-2 domain occupies isoleucine 38–lysine 106.

Belongs to the universal ribosomal protein uS3 family. Part of the 30S ribosomal subunit. Forms a tight complex with proteins S10 and S14.

In terms of biological role, binds the lower part of the 30S subunit head. Binds mRNA in the 70S ribosome, positioning it for translation. The protein is Small ribosomal subunit protein uS3 of Lactococcus lactis subsp. cremoris (strain MG1363).